The primary structure comprises 246 residues: Probable septum site-determining protein MinC (246 aa).

This sequence belongs to the MinC family. Interacts with MinD and FtsZ.

In terms of biological role, cell division inhibitor that blocks the formation of polar Z ring septums. Rapidly oscillates between the poles of the cell to destabilize FtsZ filaments that have formed before they mature into polar Z rings. Prevents FtsZ polymerization. The chain is Probable septum site-determining protein MinC from Pseudomonas syringae pv. tomato (strain ATCC BAA-871 / DC3000).